Here is a 164-residue protein sequence, read N- to C-terminus: Cytochrome c-type biogenesis protein CcmE (164 aa).

Topologically, residues 1 to 8 (MNPRRQKR) are cytoplasmic. Residues 9–29 (LIVISAIVLVIGAAIGLMLYA) form a helical; Signal-anchor for type II membrane protein membrane-spanning segment. At 30-164 (LSQNIDLFYT…QAYSTPKVSG (135 aa)) the chain is on the periplasmic side. Positions 132 and 136 each coordinate heme.

It belongs to the CcmE/CycJ family.

The protein localises to the cell inner membrane. Its function is as follows. Heme chaperone required for the biogenesis of c-type cytochromes. Transiently binds heme delivered by CcmC and transfers the heme to apo-cytochromes in a process facilitated by CcmF and CcmH. The protein is Cytochrome c-type biogenesis protein CcmE of Pseudoalteromonas atlantica (strain T6c / ATCC BAA-1087).